A 91-amino-acid chain; its full sequence is UPF0367 protein cce_2199 (91 aa).

The protein belongs to the UPF0367 family.

The sequence is that of UPF0367 protein cce_2199 from Crocosphaera subtropica (strain ATCC 51142 / BH68) (Cyanothece sp. (strain ATCC 51142)).